The chain runs to 180 residues: Pro-glucagon (180 aa).

The N-terminal stretch at 1–20 (MKSIYFVAGLFVMLVQGSWQ) is a signal peptide. The segment at 23–56 (LQDTEEKPRSFSTSQTDLLDDPDQMNEDKRHSQG) is disordered. Ser54 bears the Phosphoserine mark. A propeptide spanning residues 84–89 (NRNEIA) is cleaved from the precursor. Ser105 and Ser108 each carry phosphoserine. An Arginine amide modification is found at Arg127. The propeptide occupies 131–145 (DFPEEVTIVEELRRR). Phosphoserine is present on residues Ser150 and Ser152.

The protein belongs to the glucagon family. In terms of processing, proglucagon is post-translationally processed in a tissue-specific manner in pancreatic A cells and intestinal L cells. In pancreatic A cells, the major bioactive hormone is glucagon cleaved by PCSK2/PC2. In the intestinal L cells PCSK1/PC1 liberates GLP-1, GLP-2, glicentin and oxyntomodulin. GLP-1 is further N-terminally truncated by post-translational processing in the intestinal L cells resulting in GLP-1(7-37) GLP-1-(7-36)amide. The C-terminal amidation is neither important for the metabolism of GLP-1 nor for its effects on the endocrine pancreas. In terms of tissue distribution, glucagon is secreted in the A cells of the islets of Langerhans. GLP-1, GLP-2, oxyntomodulin and glicentin are secreted from enteroendocrine cells throughout the gastrointestinal tract. GLP-1 and GLP-2 are also secreted in selected neurons in the brain.

The protein localises to the secreted. Functionally, plays a key role in glucose metabolism and homeostasis. Regulates blood glucose by increasing gluconeogenesis and decreasing glycolysis. A counterregulatory hormone of insulin, raises plasma glucose levels in response to insulin-induced hypoglycemia. Plays an important role in initiating and maintaining hyperglycemic conditions in diabetes. In terms of biological role, potent stimulator of glucose-dependent insulin release. Also stimulates insulin release in response to IL6. Plays important roles on gastric motility and the suppression of plasma glucagon levels. May be involved in the suppression of satiety and stimulation of glucose disposal in peripheral tissues, independent of the actions of insulin. Has growth-promoting activities on intestinal epithelium. May also regulate the hypothalamic pituitary axis (HPA) via effects on LH, TSH, CRH, oxytocin, and vasopressin secretion. Increases islet mass through stimulation of islet neogenesis and pancreatic beta cell proliferation. Inhibits beta cell apoptosis. Its function is as follows. Stimulates intestinal growth and up-regulates villus height in the small intestine, concomitant with increased crypt cell proliferation and decreased enterocyte apoptosis. The gastrointestinal tract, from the stomach to the colon is the principal target for GLP-2 action. Plays a key role in nutrient homeostasis, enhancing nutrient assimilation through enhanced gastrointestinal function, as well as increasing nutrient disposal. Stimulates intestinal glucose transport and decreases mucosal permeability. Significantly reduces food intake. Inhibits gastric emptying in humans. Suppression of gastric emptying may lead to increased gastric distension, which may contribute to satiety by causing a sensation of fullness. Functionally, may modulate gastric acid secretion and the gastro-pyloro-duodenal activity. May play an important role in intestinal mucosal growth in the early period of life. The polypeptide is Pro-glucagon (GCG) (Octodon degus (Degu)).